Reading from the N-terminus, the 209-residue chain is Inorganic pyrophosphatase (209 aa).

Residues Lys-38, Arg-52, and Tyr-64 each contribute to the substrate site. Residues Asp-92, Asp-97, and Asp-130 each coordinate Mg(2+). Tyr-167 contributes to the substrate binding site.

It belongs to the PPase family. As to quaternary structure, homohexamer. The cofactor is Mg(2+).

Its subcellular location is the cytoplasm. The enzyme catalyses diphosphate + H2O = 2 phosphate + H(+). Its function is as follows. Catalyzes the hydrolysis of inorganic pyrophosphate (PPi) forming two phosphate ions. The sequence is that of Inorganic pyrophosphatase from Chlamydia muridarum (strain MoPn / Nigg).